The following is a 75-amino-acid chain: Pi-hexatoxin-Hi1d (75 aa).

6 disulfide bridges follow: C3/C18, C10/C23, C17/C33, C40/C55, C47/C60, and C54/C71. 2 Domain repeats span residues 3–33 (CIRK…FEVC) and 40–71 (CLVK…SSVC). The segment at 3-71 (CIRKWLSCVD…KRSGNKSSVC (69 aa)) is 2 X approximate repeats with cysteine pattern C-C-CC-C-C.

Belongs to the psalmotoxin-1 family. Double-knot toxin subfamily. As to expression, expressed by the venom gland.

The protein localises to the secreted. Its function is as follows. This toxin potently and selectively inhibits ASIC1a, an isoform of the gene ASIC1. It incompletely inhibits ASIC1a activation in a pH-independent and slowly reversible manner. This toxin acts by binding to and stabilizing the closed state of the channel, thereby impeding the transition into a conducting state. This toxin may bind to the acidic pocket of ASIC1a, since mutation of a key residue of this pocket (Arg-350) abolishes the ability of the toxin to inhibit ASIC1a. In vivo, this toxin protects the brain from neuronal injury when administered up to 8 hours after stroke onset. The protein is Pi-hexatoxin-Hi1d of Hadronyche infensa (Fraser island funnel-web spider).